Here is a 267-residue protein sequence, read N- to C-terminus: Serine/threonine-protein kinase 1 (267 aa).

The 249-residue stretch at 18–266 folds into the Protein kinase domain; sequence IQNNVRLVDG…YETVIKHSFL (249 aa). ATP-binding positions include 24–32 and Lys-47; that span reads LVDGKFGKM. The active-site Proton acceptor is the Asp-134.

This sequence belongs to the protein kinase superfamily. Ser/Thr protein kinase family.

It catalyses the reaction L-seryl-[protein] + ATP = O-phospho-L-seryl-[protein] + ADP + H(+). The enzyme catalyses L-threonyl-[protein] + ATP = O-phospho-L-threonyl-[protein] + ADP + H(+). In Heliothis zea nuclear polyhedrosis virus (HzSNPV), this protein is Serine/threonine-protein kinase 1 (PK1).